We begin with the raw amino-acid sequence, 387 residues long: Phosphoglycerate kinase (387 aa).

Substrate is bound by residues 21–23, Arg36, 59–62, Arg113, and Arg146; these read DLN and HLGR. ATP contacts are provided by residues Lys197, Glu314, and 340–343; that span reads GGDT.

This sequence belongs to the phosphoglycerate kinase family. As to quaternary structure, monomer.

It localises to the cytoplasm. The enzyme catalyses (2R)-3-phosphoglycerate + ATP = (2R)-3-phospho-glyceroyl phosphate + ADP. It participates in carbohydrate degradation; glycolysis; pyruvate from D-glyceraldehyde 3-phosphate: step 2/5. This chain is Phosphoglycerate kinase, found in Tolumonas auensis (strain DSM 9187 / NBRC 110442 / TA 4).